The primary structure comprises 412 residues: Acetylornithine aminotransferase (412 aa).

Residues G109–A110 and F142 each bind pyridoxal 5'-phosphate. N(2)-acetyl-L-ornithine is bound at residue R145. D233 to Q236 contributes to the pyridoxal 5'-phosphate binding site. Position 262 is an N6-(pyridoxal phosphate)lysine (K262). S289 is a N(2)-acetyl-L-ornithine binding site. T290 provides a ligand contact to pyridoxal 5'-phosphate.

This sequence belongs to the class-III pyridoxal-phosphate-dependent aminotransferase family. ArgD subfamily. As to quaternary structure, homodimer. It depends on pyridoxal 5'-phosphate as a cofactor.

It localises to the cytoplasm. It carries out the reaction N(2)-acetyl-L-ornithine + 2-oxoglutarate = N-acetyl-L-glutamate 5-semialdehyde + L-glutamate. It participates in amino-acid biosynthesis; L-arginine biosynthesis; N(2)-acetyl-L-ornithine from L-glutamate: step 4/4. This chain is Acetylornithine aminotransferase, found in Thermosynechococcus vestitus (strain NIES-2133 / IAM M-273 / BP-1).